The sequence spans 30 residues: Thermophilic aminopeptidase 1 alpha chain (30 aa).

The protein belongs to the peptidase M42 family. In terms of assembly, 12 chains of two different but homologous types, alpha and beta, which can combine in various ratios. Requires a divalent metal cation as cofactor.

In terms of biological role, metalloenzyme of broad specificity, releasing all N-terminal amino acids. The polypeptide is Thermophilic aminopeptidase 1 alpha chain (Geobacillus stearothermophilus (Bacillus stearothermophilus)).